The primary structure comprises 91 residues: Large ribosomal subunit protein bL31B (91 aa).

The protein belongs to the bacterial ribosomal protein bL31 family. Type B subfamily. In terms of assembly, part of the 50S ribosomal subunit.

The chain is Large ribosomal subunit protein bL31B from Neisseria gonorrhoeae (strain ATCC 700825 / FA 1090).